The chain runs to 219 residues: Cytidylate kinase (219 aa).

Residue 11–19 (GPAGVGKTT) coordinates ATP.

It belongs to the cytidylate kinase family. Type 1 subfamily.

It localises to the cytoplasm. The catalysed reaction is CMP + ATP = CDP + ADP. It catalyses the reaction dCMP + ATP = dCDP + ADP. This is Cytidylate kinase from Oleidesulfovibrio alaskensis (strain ATCC BAA-1058 / DSM 17464 / G20) (Desulfovibrio alaskensis).